A 447-amino-acid polypeptide reads, in one-letter code: MITLKEALKLSKDELENFKNDLKAKIEANPELNAYIDIYNIGDGVPIAIKDNIQVKDWSVTSGSNILQGYIAPYNATVIEKMLSAGLSPFGRTNMDEFAMGSTTESSFYGKTLNPHNKDCVPGGSSGGSAAAVGAGLAIAALGSDTGGSIRQPASFCGIVGMKPTYGRVSRYGLGAYASSLDQIGPMTQNVEDAAILYDIISGHDEKDSTSAHKNDKVSDKLNPNRKIRIAVLPKHIQNASEDVKKAYELAINALKKVGHEIVEAELMDAKFDISAYYITATAEATTNLARYDGIRYGNRVVGKDLNDTFVQTRSQGFGDEVKRRILLGNFVLSSGYYEAYYVKAQKTRHLIKDQYSKIFENVDLILSPVAPTTANKFGELSTPMEMYLSDLYTISVNLAGLPAISVPISKSSEGMPIGLQLIANAYDEQTLFDGALSLEREINYNA.

Residues Lys-50 and Ser-125 each act as charge relay system in the active site. Ser-149 serves as the catalytic Acyl-ester intermediate.

It belongs to the amidase family. GatA subfamily. Heterotrimer of A, B and C subunits.

It carries out the reaction L-glutamyl-tRNA(Gln) + L-glutamine + ATP + H2O = L-glutaminyl-tRNA(Gln) + L-glutamate + ADP + phosphate + H(+). Its function is as follows. Allows the formation of correctly charged Gln-tRNA(Gln) through the transamidation of misacylated Glu-tRNA(Gln) in organisms which lack glutaminyl-tRNA synthetase. The reaction takes place in the presence of glutamine and ATP through an activated gamma-phospho-Glu-tRNA(Gln). The protein is Glutamyl-tRNA(Gln) amidotransferase subunit A of Sulfurimonas denitrificans (strain ATCC 33889 / DSM 1251) (Thiomicrospira denitrificans (strain ATCC 33889 / DSM 1251)).